A 370-amino-acid polypeptide reads, in one-letter code: Histidinol-phosphate aminotransferase (370 aa).

K230 bears the N6-(pyridoxal phosphate)lysine mark.

This sequence belongs to the class-II pyridoxal-phosphate-dependent aminotransferase family. Histidinol-phosphate aminotransferase subfamily. Homodimer. Pyridoxal 5'-phosphate is required as a cofactor.

The enzyme catalyses L-histidinol phosphate + 2-oxoglutarate = 3-(imidazol-4-yl)-2-oxopropyl phosphate + L-glutamate. The protein operates within amino-acid biosynthesis; L-histidine biosynthesis; L-histidine from 5-phospho-alpha-D-ribose 1-diphosphate: step 7/9. The protein is Histidinol-phosphate aminotransferase of Leptospira interrogans serogroup Icterohaemorrhagiae serovar Lai (strain 56601).